The primary structure comprises 666 residues: TATA box-binding protein-associated factor RNA polymerase I subunit B (666 aa).

An RRN7-type zinc finger spans residues 1–29 (MICTECENDAFDEEDDGYYYCQRCGVQVE). Positions 3, 6, 21, and 24 each coordinate Zn(2+). Residues 30-64 (NLIQTGVDDGDLIGEGGGTQGALYNPKHRRTEPQP) are B-reader. Disordered regions lie at residues 45 to 110 (GGGT…VDKE) and 189 to 208 (DSEH…LKRH). The B-linker stretch occupies residues 65-80 (ITPSQPRFTDDTSRYS). The span at 78-89 (RYSQFKSQFESE) shows a compositional bias: polar residues. The N-terminal cyclin fold stretch occupies residues 81 to 285 (QFKSQFESEN…REQMGERSAA (205 aa)). Basic and acidic residues-rich tracts occupy residues 90-110 (NGNK…VDKE) and 189-202 (DSEH…VKDA). Positions 286 to 288 (CPV) are C-terminal cyclin fold. Positions 515-548 (SDGNNPCSSSSRRNESVSIGLDLSSSEHRESSSP) are disordered. The segment covering 539-548 (SSEHRESSSP) has biased composition (basic and acidic residues).

It belongs to the RRN7/TAF1B family. As to quaternary structure, interacts with TFIIF. Interacts with MEE14/CBP1, TBP1 and NRPB1 (via CTD). As to expression, expressed at high levels in seedlings, inflorescences and young siliques and at lower levels in roots. Not detected in leaves and stems. Detected in root tips and shoot apical meristems, in anthers, primarily in microspores with weaker expression in mature pollen grains and in the central cell of the mature female gametophyte. Not expressed in synergids, egg cells, antipodal cells, endosperm cells and fertilized egg cells.

The protein localises to the nucleus. The protein resides in the nucleolus. Its function is as follows. Component of RNA polymerase I core factor complex that acts as a GTF2B/TFIIB-like factor and plays a key role in multiple steps during transcription initiation such as pre-initiation complex (PIC) assembly and postpolymerase recruitment events in polymerase I (Pol I) transcription. Binds rDNA promoters and plays a role in Pol I recruitment. Required for the development of the one-cell zygote and endosperm in embryos. Required for micropylar pollen tube guidance, but has no effect on ovule development and gametophytic cell fate specification. May regulate the transcription of secreted cysteine-rich peptide (CRP) genes in the embryo sac. In Arabidopsis thaliana (Mouse-ear cress), this protein is TATA box-binding protein-associated factor RNA polymerase I subunit B.